Reading from the N-terminus, the 99-residue chain is MKSIDPRHYDVIVSPVVTEKATMASEHNKVVFKVQSGATKPQIKEAVEKLFDVKVKSVNTLVRKGKSKSFRGTFGTQSDVKRAVVTLEEGHRIDVTTGL.

It belongs to the universal ribosomal protein uL23 family. As to quaternary structure, part of the 50S ribosomal subunit. Contacts protein L29, and trigger factor when it is bound to the ribosome.

In terms of biological role, one of the early assembly proteins it binds 23S rRNA. One of the proteins that surrounds the polypeptide exit tunnel on the outside of the ribosome. Forms the main docking site for trigger factor binding to the ribosome. The sequence is that of Large ribosomal subunit protein uL23 from Rhodopseudomonas palustris (strain HaA2).